The chain runs to 546 residues: CTP synthase (546 aa).

Positions 1-265 are amidoligase domain; it reads MTKYIFVTGG…DDIIAEQLQL (265 aa). Residue S13 coordinates CTP. S13 lines the UTP pocket. ATP contacts are provided by residues 14 to 19 and D71; that span reads SLGKGI. The Mg(2+) site is built by D71 and E139. CTP is bound by residues 146-148, 186-191, and K222; these read DIE and KTKPTQ. Residues 186–191 and K222 contribute to the UTP site; that span reads KTKPTQ. One can recognise a Glutamine amidotransferase type-1 domain in the interval 290 to 542; sequence KIAMVGKYVD…VKAALAHQAD (253 aa). Residue G351 participates in L-glutamine binding. C378 (nucleophile; for glutamine hydrolysis) is an active-site residue. L-glutamine contacts are provided by residues 379-382, E402, and R469; that span reads LGMQ. Residues H515 and E517 contribute to the active site.

Belongs to the CTP synthase family. As to quaternary structure, homotetramer.

It catalyses the reaction UTP + L-glutamine + ATP + H2O = CTP + L-glutamate + ADP + phosphate + 2 H(+). It carries out the reaction L-glutamine + H2O = L-glutamate + NH4(+). The catalysed reaction is UTP + NH4(+) + ATP = CTP + ADP + phosphate + 2 H(+). It participates in pyrimidine metabolism; CTP biosynthesis via de novo pathway; CTP from UDP: step 2/2. Its activity is regulated as follows. Allosterically activated by GTP, when glutamine is the substrate; GTP has no effect on the reaction when ammonia is the substrate. The allosteric effector GTP functions by stabilizing the protein conformation that binds the tetrahedral intermediate(s) formed during glutamine hydrolysis. Inhibited by the product CTP, via allosteric rather than competitive inhibition. Functionally, catalyzes the ATP-dependent amination of UTP to CTP with either L-glutamine or ammonia as the source of nitrogen. Regulates intracellular CTP levels through interactions with the four ribonucleotide triphosphates. The chain is CTP synthase from Chromobacterium violaceum (strain ATCC 12472 / DSM 30191 / JCM 1249 / CCUG 213 / NBRC 12614 / NCIMB 9131 / NCTC 9757 / MK).